The primary structure comprises 65 residues: Small ribosomal subunit protein bS21A (65 aa).

It belongs to the bacterial ribosomal protein bS21 family.

The chain is Small ribosomal subunit protein bS21A from Francisella tularensis subsp. tularensis (strain FSC 198).